Consider the following 410-residue polypeptide: MASVGTLPASSMATKQSNASICAEKLPEGINEMKIKDDKEMEAAVVDGNGTETGHIIVTTIGGKNGQPKQTISYMAERIVGQGSFGIVFQAKCLETGETVAIKKVLQDKRYKNRELQTMRLLDHPNVVSLKHCFFSTTEKDELYLNLVLEYVPETVYRVSKHYSRANQRMPIIYVKLYTYQICRALAYIHGGVGVCHRDIKPQNLLVNPHTHQVKLCDFGSAKVLVKGEPNISYICSRYYRAPELIFGATEYTTTIDIWSAGCVLAELLLGQPLFPGESGVDQLVEIIKVLGTPTREEIKCMNPNYTEFKFPQIKAHPWHKIFHKRTPPEAVDLVSRLLQYSPNLRSTAMEAIVHPFFDELRDPNTRLPNGRALPPLFNFKPQELKGASLELLSKLIPDHARKQCSFLAL.

N-acetylalanine is present on Ala2. One can recognise a Protein kinase domain in the interval 74–358 (YMAERIVGQG…AMEAIVHPFF (285 aa)). Residues 80–88 (VGQGSFGIV) and Lys103 contribute to the ATP site. The active-site Proton acceptor is the Asp199. A Phosphotyrosine modification is found at Tyr234.

This sequence belongs to the protein kinase superfamily. CMGC Ser/Thr protein kinase family. GSK-3 subfamily. As to quaternary structure, binds to KIB1. Post-translationally, autophosphorylated mainly on threonine and serine residues.

The enzyme catalyses L-seryl-[protein] + ATP = O-phospho-L-seryl-[protein] + ADP + H(+). It catalyses the reaction L-threonyl-[protein] + ATP = O-phospho-L-threonyl-[protein] + ADP + H(+). Functionally, may mediate extracellular signals to regulate transcription in differentiating cells. This Arabidopsis thaliana (Mouse-ear cress) protein is Shaggy-related protein kinase epsilon (ASK5).